The primary structure comprises 804 residues: Protein SEY1 homolog 1 (804 aa).

Residues 1–638 (MEQIITGEGQ…SVLASQNNEH (638 aa)) lie on the Cytoplasmic side of the membrane. In terms of domain architecture, GB1/RHD3-type G spans 28–245 (GTDYHMVSII…EENYLFKEKS (218 aa)). 38 to 45 (GCQSSGKS) is a GTP binding site. Residues 639–659 (IPPWAWFLFLFSCSDYILWWL) traverse the membrane as a helical segment. Over 660 to 662 (SNP) the chain is Lumenal. Residues 663 to 683 (LLFSLTVLFGGTYLVLNQLGL) form a helical membrane-spanning segment. Topologically, residues 684–804 (WDTAVQKLLD…RKRVRVGTLV (121 aa)) are cytoplasmic. The disordered stretch occupies residues 706 to 804 (PDENNETETN…RKRVRVGTLV (99 aa)). Polar residues predominate over residues 751 to 791 (QGLTKTESNVTFANVSNANDEQSLTKNNTEDSLNTGSSSSG). A compositionally biased stretch (basic residues) spans 792-804 (QRHRKRVRVGTLV).

It belongs to the TRAFAC class dynamin-like GTPase superfamily. GB1/RHD3 GTPase family. RHD3 subfamily.

The protein localises to the endoplasmic reticulum membrane. Probable GTP-binding protein that may be involved in cell development. The chain is Protein SEY1 homolog 1 from Trichomonas vaginalis (strain ATCC PRA-98 / G3).